The primary structure comprises 365 residues: NAC domain-containing protein 43 (365 aa).

Residues 16–180 form the NAC domain; that stretch reads VPPGFRFHPT…GWVVCRIFKK (165 aa). A DNA-binding region spans residues 116–186; it reads IGMRKTLVFY…IFKKKNLHKT (71 aa).

In terms of tissue distribution, expressed in various aboveground tissues undergoing thickening of the lignified secondary wall such as anthers, filaments of stamens, the base of carpels, styles, the boundaries between siliques and pedicels, the midrib of leaf veins, and inflorescence stems, specifically in interfascicular fibers (sclerenchyma), cells differentiating into vascular vessels, and xylary fibers (secondary xylem).

Its subcellular location is the nucleus. Its function is as follows. Transcription activator of genes involved in biosynthesis of secondary walls. Together with NST2 and NST3, required for the secondary cell wall thickening of sclerenchymatous fibers, secondary xylem (tracheary elements), and of the anther endocethium, which is necessary for anther dehiscence. May also regulate the secondary cell wall lignification of other tissues. This is NAC domain-containing protein 43 (NAC043) from Arabidopsis thaliana (Mouse-ear cress).